The sequence spans 191 residues: Protein Ves (191 aa).

Belongs to the Ves family.

This is Protein Ves from Escherichia fergusonii (strain ATCC 35469 / DSM 13698 / CCUG 18766 / IAM 14443 / JCM 21226 / LMG 7866 / NBRC 102419 / NCTC 12128 / CDC 0568-73).